The sequence spans 252 residues: 5'-nucleotidase SurE (252 aa).

Residues D8, D9, S39, and N91 each coordinate a divalent metal cation.

Belongs to the SurE nucleotidase family. A divalent metal cation serves as cofactor.

The protein localises to the cytoplasm. The enzyme catalyses a ribonucleoside 5'-phosphate + H2O = a ribonucleoside + phosphate. Nucleotidase that shows phosphatase activity on nucleoside 5'-monophosphates. This Legionella pneumophila (strain Corby) protein is 5'-nucleotidase SurE.